Consider the following 185-residue polypeptide: Elongation factor P (185 aa).

This sequence belongs to the elongation factor P family.

It is found in the cytoplasm. Its pathway is protein biosynthesis; polypeptide chain elongation. In terms of biological role, involved in peptide bond synthesis. Stimulates efficient translation and peptide-bond synthesis on native or reconstituted 70S ribosomes in vitro. Probably functions indirectly by altering the affinity of the ribosome for aminoacyl-tRNA, thus increasing their reactivity as acceptors for peptidyl transferase. In Desulfitobacterium hafniense (strain DSM 10664 / DCB-2), this protein is Elongation factor P.